Reading from the N-terminus, the 205-residue chain is Small ribosomal subunit protein uS4 (205 aa).

The region spanning 95–158 (SRLDNIVYRM…TKSPLVKNFI (64 aa)) is the S4 RNA-binding domain.

It belongs to the universal ribosomal protein uS4 family. In terms of assembly, part of the 30S ribosomal subunit. Contacts protein S5. The interaction surface between S4 and S5 is involved in control of translational fidelity.

Its function is as follows. One of the primary rRNA binding proteins, it binds directly to 16S rRNA where it nucleates assembly of the body of the 30S subunit. Functionally, with S5 and S12 plays an important role in translational accuracy. This chain is Small ribosomal subunit protein uS4, found in Mycoplasma genitalium (strain ATCC 33530 / DSM 19775 / NCTC 10195 / G37) (Mycoplasmoides genitalium).